We begin with the raw amino-acid sequence, 188 residues long: Elongation factor P (188 aa).

Belongs to the elongation factor P family.

It is found in the cytoplasm. It participates in protein biosynthesis; polypeptide chain elongation. In terms of biological role, involved in peptide bond synthesis. Stimulates efficient translation and peptide-bond synthesis on native or reconstituted 70S ribosomes in vitro. Probably functions indirectly by altering the affinity of the ribosome for aminoacyl-tRNA, thus increasing their reactivity as acceptors for peptidyl transferase. The sequence is that of Elongation factor P from Bradyrhizobium diazoefficiens (strain JCM 10833 / BCRC 13528 / IAM 13628 / NBRC 14792 / USDA 110).